A 364-amino-acid chain; its full sequence is UDP-N-acetylglucosamine--N-acetylmuramyl-(pentapeptide) pyrophosphoryl-undecaprenol N-acetylglucosamine transferase (364 aa).

Residues 14-16 (TGG), N126, R163, S190, I246, 265-270 (ALTVSE), and Q291 contribute to the UDP-N-acetyl-alpha-D-glucosamine site.

It belongs to the glycosyltransferase 28 family. MurG subfamily.

Its subcellular location is the cell inner membrane. It catalyses the reaction di-trans,octa-cis-undecaprenyl diphospho-N-acetyl-alpha-D-muramoyl-L-alanyl-D-glutamyl-meso-2,6-diaminopimeloyl-D-alanyl-D-alanine + UDP-N-acetyl-alpha-D-glucosamine = di-trans,octa-cis-undecaprenyl diphospho-[N-acetyl-alpha-D-glucosaminyl-(1-&gt;4)]-N-acetyl-alpha-D-muramoyl-L-alanyl-D-glutamyl-meso-2,6-diaminopimeloyl-D-alanyl-D-alanine + UDP + H(+). The protein operates within cell wall biogenesis; peptidoglycan biosynthesis. Cell wall formation. Catalyzes the transfer of a GlcNAc subunit on undecaprenyl-pyrophosphoryl-MurNAc-pentapeptide (lipid intermediate I) to form undecaprenyl-pyrophosphoryl-MurNAc-(pentapeptide)GlcNAc (lipid intermediate II). The protein is UDP-N-acetylglucosamine--N-acetylmuramyl-(pentapeptide) pyrophosphoryl-undecaprenol N-acetylglucosamine transferase of Shewanella loihica (strain ATCC BAA-1088 / PV-4).